A 424-amino-acid polypeptide reads, in one-letter code: UPF0597 protein Sbal_3070 (424 aa).

It belongs to the UPF0597 family.

In Shewanella baltica (strain OS155 / ATCC BAA-1091), this protein is UPF0597 protein Sbal_3070.